We begin with the raw amino-acid sequence, 300 residues long: 2-methylisocitrate lyase (300 aa).

Substrate is bound at residue 53–55 (SGD). Residues aspartate 92 and aspartate 94 each coordinate Mg(2+). Residues 129–130 (CG), arginine 162, glutamate 192, 214–216 (NMT), arginine 245, and arginine 274 each bind substrate.

This sequence belongs to the isocitrate lyase/PEP mutase superfamily. Methylisocitrate lyase family. Requires Mg(2+) as cofactor.

The enzyme catalyses 3-hydroxybutane-1,2,3-tricarboxylate = pyruvate + succinate. Functionally, involved in the methylcitric acid cycle. Catalyzes the cleavage of 2-methylisocitrate to yield pyruvate and succinate. The polypeptide is 2-methylisocitrate lyase (Halalkalibacterium halodurans (strain ATCC BAA-125 / DSM 18197 / FERM 7344 / JCM 9153 / C-125) (Bacillus halodurans)).